The chain runs to 119 residues: Large ribosomal subunit protein bL20 (119 aa).

This sequence belongs to the bacterial ribosomal protein bL20 family.

In terms of biological role, binds directly to 23S ribosomal RNA and is necessary for the in vitro assembly process of the 50S ribosomal subunit. It is not involved in the protein synthesizing functions of that subunit. The chain is Large ribosomal subunit protein bL20 from Streptococcus equi subsp. equi (strain 4047).